The sequence spans 320 residues: Probable cell division protein WhiA (320 aa).

The H-T-H motif DNA-binding region spans 282-315 (TLKELGEMLSPAIGKSGVNHRLRKIDEIATKLQE).

The protein belongs to the WhiA family.

Functionally, involved in cell division and chromosome segregation. The sequence is that of Probable cell division protein WhiA from Alkaliphilus oremlandii (strain OhILAs) (Clostridium oremlandii (strain OhILAs)).